Consider the following 191-residue polypeptide: dTTP/UTP pyrophosphatase (191 aa).

Aspartate 75 (proton acceptor) is an active-site residue.

Belongs to the Maf family. YhdE subfamily. Requires a divalent metal cation as cofactor.

It localises to the cytoplasm. It catalyses the reaction dTTP + H2O = dTMP + diphosphate + H(+). The catalysed reaction is UTP + H2O = UMP + diphosphate + H(+). Its function is as follows. Nucleoside triphosphate pyrophosphatase that hydrolyzes dTTP and UTP. May have a dual role in cell division arrest and in preventing the incorporation of modified nucleotides into cellular nucleic acids. This Aliivibrio fischeri (strain ATCC 700601 / ES114) (Vibrio fischeri) protein is dTTP/UTP pyrophosphatase.